A 669-amino-acid chain; its full sequence is Putative transcription factor SOX-14 (669 aa).

Over residues 1-12 (MIAKPNQATTEP) the composition is skewed to polar residues. 3 disordered regions span residues 1 to 149 (MIAK…EMTL), 254 to 336 (YKYR…PKYE), and 419 to 439 (SSLT…MDNI). A compositionally biased stretch (low complexity) spans 17 to 37 (RPGTVPTVPATTPARPATITI). Positions 52–71 (TLPPFSPSPSPASSPSPAPA) are enriched in pro residues. A compositionally biased stretch (polar residues) spans 75 to 84 (GAQKTQSQAA). Residues 88 to 105 (PAAVASPSAPVAAAAPKT) are compositionally biased toward low complexity. A compositionally biased stretch (basic and acidic residues) spans 130–145 (RESEMDGERSPSHSGH). The HMG box DNA-binding region spans 187 to 255 (IKRPMNAFMV…LHMIEYPNYK (69 aa)). Over residues 284–294 (TTNNNNSLTTL) the composition is skewed to low complexity. A compositionally biased stretch (polar residues) spans 295–318 (AINGTTTAGRKSKRSTSTCQSGSA). Over residues 322–336 (LRNDSGDTSSKPKYE) the composition is skewed to basic and acidic residues. Positions 419 to 431 (SSLTQSQHNQSDP) are enriched in polar residues.

Its subcellular location is the nucleus. In Drosophila melanogaster (Fruit fly), this protein is Putative transcription factor SOX-14 (Sox14).